The following is a 323-amino-acid chain: Breast cancer metastasis-suppressor 1-like protein-A (323 aa).

Residues 1 to 15 (MPVHSREKKESNHEE) are compositionally biased toward basic and acidic residues. The disordered stretch occupies residues 1-52 (MPVHSREKKESNHEEMEVDFAEQEGSSSEDEDTESSSVSEDGESSEMDDEDC). The span at 16–51 (MEVDFAEQEGSSSEDEDTESSSVSEDGESSEMDDED) shows a compositional bias: acidic residues. 2 coiled-coil regions span residues 50 to 81 (EDCE…YKER) and 156 to 178 (QTEL…ITSE).

It belongs to the BRMS1 family.

The protein resides in the nucleus. Its function is as follows. Involved in the histone deacetylase (HDAC1)-dependent transcriptional repression activity. This is Breast cancer metastasis-suppressor 1-like protein-A (brms1la) from Danio rerio (Zebrafish).